Here is a 919-residue protein sequence, read N- to C-terminus: MNCEDQAVDLCKAIDLCNVSDNTISHPTPAEEILPRDGLQLMDGDQEEQDAAVLTRLKDVHLKDDALHTKNNGSIAVSADPVNGSAGDLQQSTVEEPLATKCSVGDVGDDGEMDIGVDLSLDENGVLEFEPTAQTQSEESASSCENSLISDTVIELHSQEPLEEHSVDVPSETVPAAATPVVEEAGIKHGLKRVTFPSDEDIVSGAVEPKDPWRHAQNVTVEEILNAYRQACQKLNCKPIPKVLKQTQDLKDLTQRNECLDLKGEKLDYKSCESLEEIFKRVQFKLVDLEQTNLDEDGASALFDMIEYYESATHLNISNNKHIGTRGWQAAAHMMRKTNSLQYLDARNTPLLDHSAPFVARALRISSSLTVLHLENSGISGRPLMLLATALKMNMNLRELYLAENKLNGLQDSAQLGNLLKFNYNIQILDLRNNHILDSGLAYVCEGLKEQRKGLVTLVLWNNQLTHNGMGYLAAALPFTQSLETLNLGHNAVGNEGVHKLKDGLISNRSILRLGLASTKLSCEGAVAIAEFIAESPRLLRLDMRENEIKTGGLMALSLAFKVNTSLLRLDLDREPKKETVKSFIETQRALLADIQNGCKRNFILAREKEETEQKMRLSASMAEIATEDQTHEEEEEEEASPLKKIEEETTDALKDATQESSEVSENQEPKDQESTPQDDSDSDTEDEETPTNTSLTSTSPIPIPAAADTSKTIPSTPPIASPAVISGITVTEASIVTPSSPGRCISVSSPGRGHKIFMVTRVESPPEQQQTSIAMLKSIQPSAITDIKAPSQTQNSTQPTEKSHAEKTPDAQQEDSVSTSTPSLDANIDQTQLTESVSEEEQKKAETLNNEADINEDANTGAPLPNGLKPEFALFEFEGAKPASCIMEHVSVTAELSCGQDLEELLLDASLETSRDAP.

6 LRR repeats span residues 340 to 361 (SLQYLDARNTPLLDHSAPFVAR), 368 to 388 (SLTVLHLENSGISGRPLMLLA), 396 to 417 (NLRELYLAENKLNGLQDSAQLG), 425 to 445 (NIQILDLRNNHILDSGLAYVC), 454 to 474 (GLVTLVLWNNQLTHNGMGYLA), and 482 to 502 (SLETLNLGHNAVGNEGVHKLK). 2 disordered regions span residues 626-716 (ATED…TIPS) and 790-866 (APSQ…APLP). Over residues 631–640 (THEEEEEEEA) the composition is skewed to acidic residues. The segment covering 641-658 (SPLKKIEEETTDALKDAT) has biased composition (basic and acidic residues). Over residues 677–690 (PQDDSDSDTEDEET) the composition is skewed to acidic residues. Over residues 691–701 (PTNTSLTSTSP) the composition is skewed to low complexity. Composition is skewed to polar residues over residues 791-801 (PSQTQNSTQPT) and 811-837 (DAQQEDSVSTSTPSLDANIDQTQLTES). Positions 833–861 (QLTESVSEEEQKKAETLNNEADINEDANT) form a coiled coil.

Belongs to the PPP1R37 family.

Its function is as follows. May inhibit phosphatase activity of protein phosphatase 1 (PP1) complexes. This Danio rerio (Zebrafish) protein is Protein phosphatase 1 regulatory subunit 37 (ppp1r37).